Consider the following 118-residue polypeptide: Small ribosomal subunit protein eS10 (118 aa).

The tract at residues 91–118 (RLKNAPAERPRPSRGGPRRGGYRGRARD) is disordered. A compositionally biased stretch (basic residues) spans 106-118 (GPRRGGYRGRARD).

This sequence belongs to the eukaryotic ribosomal protein eS10 family. As to quaternary structure, component of the small ribosomal subunit. Mature ribosomes consist of a small (40S) and a large (60S) subunit. The 40S subunit contains about 32 different proteins and 1 molecule of RNA (18S). The 60S subunit contains 45 different proteins and 3 molecules of RNA (25S, 5.8S and 5S).

The protein localises to the cytoplasm. In terms of biological role, component of the ribosome, a large ribonucleoprotein complex responsible for the synthesis of proteins in the cell. The small ribosomal subunit (SSU) binds messenger RNAs (mRNAs) and translates the encoded message by selecting cognate aminoacyl-transfer RNA (tRNA) molecules. The large subunit (LSU) contains the ribosomal catalytic site termed the peptidyl transferase center (PTC), which catalyzes the formation of peptide bonds, thereby polymerizing the amino acids delivered by tRNAs into a polypeptide chain. The nascent polypeptides leave the ribosome through a tunnel in the LSU and interact with protein factors that function in enzymatic processing, targeting, and the membrane insertion of nascent chains at the exit of the ribosomal tunnel. The polypeptide is Small ribosomal subunit protein eS10 (RPS10) (Candida albicans (strain SC5314 / ATCC MYA-2876) (Yeast)).